The following is a 308-amino-acid chain: Mycothiol acetyltransferase (308 aa).

Glu-44 contributes to the 1D-myo-inositol 2-(L-cysteinylamino)-2-deoxy-alpha-D-glucopyranoside binding site. 83-85 (AVV) is an acetyl-CoA binding site. Residues 161 to 308 (VRLRTYAGSA…DVAYGRPEGD (148 aa)) enclose the N-acetyltransferase domain. 1D-myo-inositol 2-(L-cysteinylamino)-2-deoxy-alpha-D-glucopyranoside is bound by residues Glu-188, Lys-230, and Glu-238. Acetyl-CoA-binding positions include 242–244 (VGV) and 249–255 (QGRGLGR). Position 276 (Tyr-276) interacts with 1D-myo-inositol 2-(L-cysteinylamino)-2-deoxy-alpha-D-glucopyranoside. 281 to 286 (NTAALH) provides a ligand contact to acetyl-CoA.

This sequence belongs to the acetyltransferase family. MshD subfamily. In terms of assembly, monomer.

The enzyme catalyses 1D-myo-inositol 2-(L-cysteinylamino)-2-deoxy-alpha-D-glucopyranoside + acetyl-CoA = mycothiol + CoA + H(+). Catalyzes the transfer of acetyl from acetyl-CoA to desacetylmycothiol (Cys-GlcN-Ins) to form mycothiol. This Gordonia bronchialis (strain ATCC 25592 / DSM 43247 / BCRC 13721 / JCM 3198 / KCTC 3076 / NBRC 16047 / NCTC 10667) (Rhodococcus bronchialis) protein is Mycothiol acetyltransferase.